A 369-amino-acid polypeptide reads, in one-letter code: D-alanine--D-alanine ligase (369 aa).

The ATP-grasp domain occupies 152-359 (KKLFAAEGLP…YPSLLATMVE (208 aa)). ATP is bound at residue 180–235 (RERLGLPVFVKPARGGSSIGVSRVSSWDELDAAVAAARDHDPKVIVEAAIAGRELE). 3 residues coordinate Mg(2+): aspartate 314, glutamate 326, and asparagine 328.

This sequence belongs to the D-alanine--D-alanine ligase family. The cofactor is Mg(2+). Mn(2+) serves as cofactor.

It localises to the cytoplasm. It catalyses the reaction 2 D-alanine + ATP = D-alanyl-D-alanine + ADP + phosphate + H(+). It participates in cell wall biogenesis; peptidoglycan biosynthesis. Functionally, cell wall formation. The protein is D-alanine--D-alanine ligase of Mycolicibacterium paratuberculosis (strain ATCC BAA-968 / K-10) (Mycobacterium paratuberculosis).